The primary structure comprises 466 residues: Methylenetetrahydrofolate--tRNA-(uracil-5-)-methyltransferase TrmFO (466 aa).

Position 14-19 (14-19) interacts with FAD; it reads GGGLAG.

The protein belongs to the MnmG family. TrmFO subfamily. The cofactor is FAD.

The protein localises to the cytoplasm. The catalysed reaction is uridine(54) in tRNA + (6R)-5,10-methylene-5,6,7,8-tetrahydrofolate + NADH + H(+) = 5-methyluridine(54) in tRNA + (6S)-5,6,7,8-tetrahydrofolate + NAD(+). It carries out the reaction uridine(54) in tRNA + (6R)-5,10-methylene-5,6,7,8-tetrahydrofolate + NADPH + H(+) = 5-methyluridine(54) in tRNA + (6S)-5,6,7,8-tetrahydrofolate + NADP(+). In terms of biological role, catalyzes the folate-dependent formation of 5-methyl-uridine at position 54 (M-5-U54) in all tRNAs. This Brucella melitensis biotype 1 (strain ATCC 23456 / CCUG 17765 / NCTC 10094 / 16M) protein is Methylenetetrahydrofolate--tRNA-(uracil-5-)-methyltransferase TrmFO.